The chain runs to 325 residues: Germination protease (325 aa).

Residues 1–7 (MYNVRTD) constitute a propeptide that is removed on maturation.

Belongs to the peptidase A25 family. In terms of assembly, homotetramer. Autoproteolytically processed. The inactive tetrameric zymogen termed p46 autoprocesses to a smaller form termed p41, which is active only during spore germination.

It carries out the reaction Endopeptidase action with P4 Glu or Asp, P1 preferably Glu &gt; Asp, P1' hydrophobic and P2' Ala.. Functionally, initiates the rapid degradation of small, acid-soluble proteins during spore germination. In Clostridium perfringens (strain ATCC 13124 / DSM 756 / JCM 1290 / NCIMB 6125 / NCTC 8237 / Type A), this protein is Germination protease.